The sequence spans 163 residues: Ribosome maturation factor RimP (163 aa).

The interval 66–85 (ALDRDDPVPGPPYELEVSSP) is disordered.

It belongs to the RimP family.

Its subcellular location is the cytoplasm. Its function is as follows. Required for maturation of 30S ribosomal subunits. This Kocuria rhizophila (strain ATCC 9341 / DSM 348 / NBRC 103217 / DC2201) protein is Ribosome maturation factor RimP.